The following is a 427-amino-acid chain: Dihydroorotase (427 aa).

H57 and H59 together coordinate Zn(2+). Substrate is bound by residues 59 to 61 (HLR) and N91. D149, H176, and H229 together coordinate Zn(2+). N275 contributes to the substrate binding site. D302 serves as a coordination point for Zn(2+). Residue D302 is part of the active site. Substrate contacts are provided by residues H306 and 320-321 (FG).

It belongs to the metallo-dependent hydrolases superfamily. DHOase family. Class I DHOase subfamily. Zn(2+) is required as a cofactor.

The catalysed reaction is (S)-dihydroorotate + H2O = N-carbamoyl-L-aspartate + H(+). It functions in the pathway pyrimidine metabolism; UMP biosynthesis via de novo pathway; (S)-dihydroorotate from bicarbonate: step 3/3. Catalyzes the reversible cyclization of carbamoyl aspartate to dihydroorotate. The protein is Dihydroorotase of Shouchella clausii (strain KSM-K16) (Alkalihalobacillus clausii).